Reading from the N-terminus, the 351-residue chain is Pentatricopeptide repeat-containing protein At2g40240, mitochondrial (351 aa).

The transit peptide at 1–27 (MSLLRRRFVKQSVNCITFLQILAERSF) directs the protein to the mitochondrion. PPR repeat units follow at residues 106 to 140 (RKNAYDILISRLCKLGRIDDALIVIGDMSNGRLGL), 141 to 175 (TPSTYHPILCSLTRKYKIEEAWRVVESMRSKSVSM), 176 to 210 (DVTAYNYFLTSHCYDGELESASEVMRKIEEDGNSP), 211 to 245 (DSRSYDALVLGACRAGKVEAAMAILRRMEEDGVTV), 246 to 280 (LYSTHAHVITGLVEGGYYALGLEFVMAYAGKDLRL), and 281 to 315 (DSESFGFLAGKLVKRKRYEEAMIVVKEMVMRGLRM).

It belongs to the PPR family. P subfamily.

Its subcellular location is the mitochondrion. The chain is Pentatricopeptide repeat-containing protein At2g40240, mitochondrial from Arabidopsis thaliana (Mouse-ear cress).